We begin with the raw amino-acid sequence, 1237 residues long: Structural protein VP1 (1237 aa).

The region spanning 1006 to 1222 (EPLRTLLFKL…ENDVRIAMIH (217 aa)) is the PPPDE domain. Catalysis depends on residues H1040 and C1192.

Its subcellular location is the virion. In Rice ragged stunt virus (isolate Thailand) (RRSV), this protein is Structural protein VP1.